Here is a 334-residue protein sequence, read N- to C-terminus: Cytosolic Fe-S cluster assembly factor NUBP1 homolog (334 aa).

The disordered stretch occupies residues 1–24; the sequence is MSSAEVTAAAKPADAPEHCPGTAS. Residues C19, C33, C36, and C42 each coordinate [4Fe-4S] cluster. 72 to 79 contacts ATP; sequence GKGGVGKS. C247 and C250 together coordinate [4Fe-4S] cluster.

Belongs to the Mrp/NBP35 ATP-binding proteins family. NUBP1/NBP35 subfamily. Heterotetramer of 2 NUBP1 and 2 NUBP2 chains. Requires [4Fe-4S] cluster as cofactor.

Its subcellular location is the cytoplasm. Its function is as follows. Component of the cytosolic iron-sulfur (Fe/S) protein assembly (CIA) machinery. Required for maturation of extramitochondrial Fe-S proteins. The NUBP1-NUBP2 heterotetramer forms a Fe-S scaffold complex, mediating the de novo assembly of an Fe-S cluster and its transfer to target apoproteins. This Culex quinquefasciatus (Southern house mosquito) protein is Cytosolic Fe-S cluster assembly factor NUBP1 homolog.